The chain runs to 494 residues: Probable cytochrome P450 518A1 (494 aa).

A helical transmembrane segment spans residues 1 to 21 (MSILIILIISIIFYLIFDFLY). Residue C438 participates in heme binding.

The protein belongs to the cytochrome P450 family. It depends on heme as a cofactor.

Its subcellular location is the membrane. In Dictyostelium discoideum (Social amoeba), this protein is Probable cytochrome P450 518A1 (cyp518A1).